A 269-amino-acid polypeptide reads, in one-letter code: MIRTLLLSTLVAGALSCGDPTYPPYVTRVVGGEEARPNSWPWQVSLQYSSNGKWYHTCGGSLIANSWVLTAAHCISSSRTYRVGLGRHNLYVAESGSLAVSVSKIVVHKDWNSNQISKGNDIALLKLANPVSLTDKIQLACLPPAGTILPNNYPCYVTGWGRLQTNGAVPDVLQQGRLLVVDYATCSSSAWWGSSVKTSMICAGGDGVISSCNGDSGGPLNCQASDGRWQVHGIVSFGSRLGCNYYHKPSVFTRVSNYIDWINSVIANN.

A signal peptide spans 1–16; the sequence is MIRTLLLSTLVAGALS. A propeptide spans 17–28 (activation peptide); the sequence is CGDPTYPPYVTR. The region spanning 29–267 is the Peptidase S1 domain; it reads VVGGEEARPN…YIDWINSVIA (239 aa). Cys-58 and Cys-74 form a disulfide bridge. Catalysis depends on charge relay system residues His-73 and Asp-121. Cystine bridges form between Cys-155–Cys-222, Cys-186–Cys-202, and Cys-212–Cys-243. Residue Ser-216 is the Charge relay system of the active site.

Belongs to the peptidase S1 family. Elastase subfamily. In terms of assembly, interacts with CPA1. Interacts with SERPINA1. In terms of tissue distribution, expressed in pancreas. Not detected in keratinocytes. Detected in exocrine secretions of the pancreas (at protein level). Also expressed in a small fraction of cells in pancreatic islets, adrenal cortex, intestinal glands and colonic lymphoid follicles (at protein level). Detected in plasma.

The protein localises to the secreted. The enzyme catalyses Preferential cleavage: Leu-|-Xaa, Met-|-Xaa and Phe-|-Xaa. Hydrolyzes elastin.. In terms of biological role, elastase that enhances insulin signaling and might have a physiologic role in cellular glucose metabolism. Circulates in plasma and reduces platelet hyperactivation, triggers both insulin secretion and degradation, and increases insulin sensitivity. The chain is Chymotrypsin-like elastase family member 2A from Homo sapiens (Human).